We begin with the raw amino-acid sequence, 238 residues long: uncharacterized protein (238 aa).

Residues 1-20 form a disordered region; it reads MPNLHSLPLGTRPENAIRNN.

Belongs to the PEP2 family.

This is an uncharacterized protein from Emericella nidulans (strain FGSC A4 / ATCC 38163 / CBS 112.46 / NRRL 194 / M139) (Aspergillus nidulans).